Consider the following 465-residue polypeptide: Ribulose bisphosphate carboxylase large chain (465 aa).

Lysine 4 is modified (N6,N6,N6-trimethyllysine). Substrate is bound by residues asparagine 113 and threonine 163. Lysine 165 functions as the Proton acceptor in the catalytic mechanism. Substrate is bound at residue lysine 167. Mg(2+)-binding residues include lysine 191, aspartate 193, and glutamate 194. N6-carboxylysine is present on lysine 191. Histidine 284 (proton acceptor) is an active-site residue. Substrate is bound by residues arginine 285, histidine 317, and serine 369.

Belongs to the RuBisCO large chain family. Type I subfamily. In terms of assembly, heterohexadecamer of 8 large chains and 8 small chains; disulfide-linked. The disulfide link is formed within the large subunit homodimers. The cofactor is Mg(2+). Post-translationally, the disulfide bond which can form in the large chain dimeric partners within the hexadecamer appears to be associated with oxidative stress and protein turnover.

Its subcellular location is the plastid. The protein resides in the chloroplast. The catalysed reaction is 2 (2R)-3-phosphoglycerate + 2 H(+) = D-ribulose 1,5-bisphosphate + CO2 + H2O. The enzyme catalyses D-ribulose 1,5-bisphosphate + O2 = 2-phosphoglycolate + (2R)-3-phosphoglycerate + 2 H(+). In terms of biological role, ruBisCO catalyzes two reactions: the carboxylation of D-ribulose 1,5-bisphosphate, the primary event in carbon dioxide fixation, as well as the oxidative fragmentation of the pentose substrate in the photorespiration process. Both reactions occur simultaneously and in competition at the same active site. The polypeptide is Ribulose bisphosphate carboxylase large chain (Nepenthes alata (Winged pitcher plant)).